A 60-amino-acid polypeptide reads, in one-letter code: Truncated protein A35 homolog (60 aa).

This sequence belongs to the chordopoxvirinae A35 protein family.

This is Truncated protein A35 homolog (A38R) from Variola virus (isolate Human/India/Ind3/1967) (VARV).